A 307-amino-acid chain; its full sequence is Coproporphyrin III ferrochelatase (307 aa).

Fe-coproporphyrin III-binding positions include Tyr12, Arg29, 45 to 46 (RY), Ser53, and Tyr124. Fe(2+)-binding residues include His181 and Glu263.

The protein belongs to the ferrochelatase family.

The protein localises to the cytoplasm. The enzyme catalyses Fe-coproporphyrin III + 2 H(+) = coproporphyrin III + Fe(2+). The protein operates within porphyrin-containing compound metabolism; protoheme biosynthesis. Involved in coproporphyrin-dependent heme b biosynthesis. Catalyzes the insertion of ferrous iron into coproporphyrin III to form Fe-coproporphyrin III. The polypeptide is Coproporphyrin III ferrochelatase (Staphylococcus epidermidis (strain ATCC 12228 / FDA PCI 1200)).